The chain runs to 813 residues: Leucine--tRNA ligase (813 aa).

Residues 42–52 carry the 'HIGH' region motif; sequence PYTSGNLHIGH. Residues 580 to 584 carry the 'KMSKS' region motif; that stretch reads KMSKS. Residue lysine 583 participates in ATP binding.

The protein belongs to the class-I aminoacyl-tRNA synthetase family.

It is found in the cytoplasm. The catalysed reaction is tRNA(Leu) + L-leucine + ATP = L-leucyl-tRNA(Leu) + AMP + diphosphate. In Dehalococcoides mccartyi (strain ATCC BAA-2266 / KCTC 15142 / 195) (Dehalococcoides ethenogenes (strain 195)), this protein is Leucine--tRNA ligase.